The following is a 263-amino-acid chain: Type III pantothenate kinase (263 aa).

Position 14 to 21 (14 to 21 (DIGNTSVN)) interacts with ATP. 115–118 (GADR) serves as a coordination point for substrate. Asp-117 acts as the Proton acceptor in catalysis. Position 137 (Asp-137) interacts with K(+). An ATP-binding site is contributed by Thr-140. A substrate-binding site is contributed by Thr-192.

This sequence belongs to the type III pantothenate kinase family. In terms of assembly, homodimer. Requires NH4(+) as cofactor. It depends on K(+) as a cofactor.

The protein resides in the cytoplasm. It catalyses the reaction (R)-pantothenate + ATP = (R)-4'-phosphopantothenate + ADP + H(+). It participates in cofactor biosynthesis; coenzyme A biosynthesis; CoA from (R)-pantothenate: step 1/5. In terms of biological role, catalyzes the phosphorylation of pantothenate (Pan), the first step in CoA biosynthesis. The chain is Type III pantothenate kinase from Dehalococcoides mccartyi (strain CBDB1).